A 317-amino-acid polypeptide reads, in one-letter code: Small ribosomal subunit protein RACK1 (317 aa).

7 WD repeats span residues 13-44, 61-91, 103-133, 146-178, 190-220, 231-260, and 281-311; these read GHSG…IMWK, GHSH…RLWD, GHTK…KLWN, SHTE…KVWN, GHTG…MLWD, DGGD…KIWD, and AEPP…RVWQ.

The protein belongs to the WD repeat G protein beta family. Ribosomal protein RACK1 subfamily.

Its subcellular location is the cytoplasm. Functionally, involved in the recruitment, assembly and/or regulation of a variety of signaling molecules. Interacts with a wide variety of proteins and plays a role in many cellular processes. Required for VANGL2 membrane localization, inhibits Wnt signaling and regulates cellular polarization and oriented cell division during gastrulation. This is Small ribosomal subunit protein RACK1 (gnb2l1) from Danio rerio (Zebrafish).